The following is a 224-amino-acid chain: Holliday junction branch migration complex subunit RuvA (224 aa).

Positions 1 to 64 are domain I; sequence MIGKVAGILD…EDLLQLFGFP (64 aa). The segment at 65–143 is domain II; that stretch reads TMIEKEWHRL…ALMAMGGGTA (79 aa). Residues 141 to 185 form a disordered region; that stretch reads GTAALAPSEPPEPQPGTSSGSRRKTRAPEPPRPSHTADALSALAN. Residues 144-170 are flexible linker; that stretch reads ALAPSEPPEPQPGTSSGSRRKTRAPEP. The segment at 171 to 224 is domain III; that stretch reads PRPSHTADALSALANLGYQPTDAAQAVAQAAGESPDADTAALIRAALKLLAPKS.

The protein belongs to the RuvA family. In terms of assembly, homotetramer. Forms an RuvA(8)-RuvB(12)-Holliday junction (HJ) complex. HJ DNA is sandwiched between 2 RuvA tetramers; dsDNA enters through RuvA and exits via RuvB. An RuvB hexamer assembles on each DNA strand where it exits the tetramer. Each RuvB hexamer is contacted by two RuvA subunits (via domain III) on 2 adjacent RuvB subunits; this complex drives branch migration. In the full resolvosome a probable DNA-RuvA(4)-RuvB(12)-RuvC(2) complex forms which resolves the HJ.

It is found in the cytoplasm. Its function is as follows. The RuvA-RuvB-RuvC complex processes Holliday junction (HJ) DNA during genetic recombination and DNA repair, while the RuvA-RuvB complex plays an important role in the rescue of blocked DNA replication forks via replication fork reversal (RFR). RuvA specifically binds to HJ cruciform DNA, conferring on it an open structure. The RuvB hexamer acts as an ATP-dependent pump, pulling dsDNA into and through the RuvAB complex. HJ branch migration allows RuvC to scan DNA until it finds its consensus sequence, where it cleaves and resolves the cruciform DNA. The sequence is that of Holliday junction branch migration complex subunit RuvA from Cereibacter sphaeroides (strain KD131 / KCTC 12085) (Rhodobacter sphaeroides).